A 590-amino-acid chain; its full sequence is L-gulonolactone oxidase 5 (590 aa).

The signal sequence occupies residues 1–31 (MAFGYSPSYCSFWRTLLGLYCLFTLVHTVIS). The FAD-binding PCMH-type domain occupies 60 to 242 (STCRAANVAY…SQVTFELQPM (183 aa)).

It belongs to the oxygen-dependent FAD-linked oxidoreductase family. It depends on FAD as a cofactor.

The catalysed reaction is L-gulono-1,4-lactone + O2 = L-ascorbate + H2O2 + H(+). It functions in the pathway cofactor biosynthesis; L-ascorbate biosynthesis. In terms of biological role, catalyzes the oxidation of L-gulono-1,4-lactone to ascorbic acid. L-gulono-1,4-lactone is oxidized to hydrogen peroxide and L-xylo-hexulonolactone which spontaneously isomerizes to L-ascorbate. The protein is L-gulonolactone oxidase 5 of Arabidopsis thaliana (Mouse-ear cress).